The chain runs to 340 residues: Solute carrier family 35 member G3 (340 aa).

The interval 11 to 31 is disordered; that stretch reads PDFTQPSPPSTPSSLTSNHHN. Transmembrane regions (helical) follow at residues 39–59, 69–89, 107–127, 160–180, 189–209, 223–243, 257–277, 283–303, and 307–327; these read TKGL…VGPF, LPSL…ALIL, FLHA…VQVV, AWCG…PGLG, LYTA…SLGL, TVAF…LFVL, CMVA…YAVT, LVCA…YYVL, and VAPS…IITA. An EamA 1 domain is found at 51 to 176; sequence LSAGFVGPFS…STLGLIIIVG (126 aa). The EamA 2 domain maps to 223 to 327; that stretch reads TVAFLFGLVG…VLGSIAIITA (105 aa).

Belongs to the SLC35G solute transporter family.

Its subcellular location is the membrane. The chain is Solute carrier family 35 member G3 (Slc35g3) from Rattus norvegicus (Rat).